Consider the following 130-residue polypeptide: Small ribosomal subunit protein uS9 (130 aa).

Belongs to the universal ribosomal protein uS9 family.

The polypeptide is Small ribosomal subunit protein uS9 (Neisseria gonorrhoeae (strain ATCC 700825 / FA 1090)).